A 383-amino-acid chain; its full sequence is Interleukin-13 receptor subunit alpha-2 (383 aa).

The signal sequence occupies residues 1-21 (MAFVHIRCLCFILLCTITGYS). Residues 22–334 (LEIKVNPPQD…WEGYTGPDSK (313 aa)) lie on the Extracellular side of the membrane. 3 Fibronectin type-III domains span residues 28-128 (PPQD…SDEG), 131-219 (ETKI…PIRS), and 234-332 (PPEF…TGPD). Residues C59 and C107 are joined by a disulfide bond. N-linked (GlcNAc...) asparagine glycosylation occurs at N109. C139 and C149 are joined by a disulfide. N-linked (GlcNAc...) asparagine glycosylation is present at N162. A disulfide bond links C178 and C191. N-linked (GlcNAc...) asparagine glycosylation is found at N209 and N293. A disulfide bridge connects residues C263 and C310. The WSXWS motif signature appears at 316–320 (WSEWS). The helical transmembrane segment at 335-355 (IIFIVPVCLFFIFLLLLLCLI) threads the bilayer. The Cytoplasmic portion of the chain corresponds to 356–383 (VEKEEPEPTLSLHVDLNKEVCAYEDTLC).

This sequence belongs to the type I cytokine receptor family. Type 5 subfamily. As to quaternary structure, interacts with IL4RA. Interacts with high affinity to interleukin-13 (IL13), but not to interleukin-4 (IL4). Post-translationally, cleaved by MMP8 leading to a soluble form that is also able to interact with IL13.

It is found in the cell membrane. The protein localises to the secreted. Its function is as follows. Cell surface receptor that plays a role in the regulation of IL-13-mediated responses. Functions as a decoy receptor that inhibits IL-13- and IL-4-mediated signal transduction via the JAK-STAT pathway and thereby modulates immune responses and inflammation. Serves as a functional signaling receptor for IL-13 in an alternative pathway involving AP-1 ultimately leading to the production of TGFB1. This chain is Interleukin-13 receptor subunit alpha-2 (Il13ra2), found in Mus musculus (Mouse).